Reading from the N-terminus, the 166-residue chain is Large ribosomal subunit protein uL11 (166 aa).

Arg-67 is modified (N5-methylarginine).

This sequence belongs to the universal ribosomal protein uL11 family.

This Encephalitozoon cuniculi (strain GB-M1) (Microsporidian parasite) protein is Large ribosomal subunit protein uL11 (RPL12).